Reading from the N-terminus, the 402-residue chain is MAECPTDLINEMFLRLRATTLVKCRVLSKPCFSLIDSPEFVSSHLRRRLETGEHLMILLRGPRLLRTVELDSPENVSDIPHPLQAGGFTEVFGSFNGVIGLCNSPVDLAIFNPSTRKIHRLPIEPIDFPERDITREYVFYGLGYDSVGDDFKVVRIVQCKLKEGKKKFPCPVEVKVFSLKKNSWKRVCLMFEFQILWISYYYHLLPRRGYGVVVNNHLHWILPRRQGVIAFNAIIKYDLASDDIGVLSFPQELYIEDNMDIGVLDGCVCLMCYDEYSHVDVWVLKEYEDYKSWTKLYRVPKPESVESVEFIRPLICSKDRSKILLEINNAANLMWFDLESQSLTTAGIECDSSFTADILVSSLVLGCKGDPTQAQRSKDQKMMPKSTKRWDGFLSKGFKLKL.

One can recognise an F-box domain in the interval 1 to 49; that stretch reads MAECPTDLINEMFLRLRATTLVKCRVLSKPCFSLIDSPEFVSSHLRRRL.

This chain is F-box protein At4g22390, found in Arabidopsis thaliana (Mouse-ear cress).